The primary structure comprises 448 residues: Glucose-6-phosphate isomerase (448 aa).

The Proton donor role is filled by Glu-290. Residues His-311 and Lys-425 contribute to the active site.

The protein belongs to the GPI family.

The protein resides in the cytoplasm. It carries out the reaction alpha-D-glucose 6-phosphate = beta-D-fructose 6-phosphate. It functions in the pathway carbohydrate biosynthesis; gluconeogenesis. The protein operates within carbohydrate degradation; glycolysis; D-glyceraldehyde 3-phosphate and glycerone phosphate from D-glucose: step 2/4. In terms of biological role, catalyzes the reversible isomerization of glucose-6-phosphate to fructose-6-phosphate. The polypeptide is Glucose-6-phosphate isomerase (Oceanobacillus iheyensis (strain DSM 14371 / CIP 107618 / JCM 11309 / KCTC 3954 / HTE831)).